A 304-amino-acid polypeptide reads, in one-letter code: Undecaprenyl-diphosphatase (304 aa).

The next 8 helical transmembrane spans lie at 5-25 (FLFI…EFVP), 47-67 (GFPE…VVVL), 72-92 (ISSS…LKTS), 111-131 (FGIN…LFHD), 137-157 (LFST…LIVI), 209-231 (ISGL…AMVG), 248-268 (TNWI…LVVI), and 283-303 (FAIY…TKVI).

Belongs to the UppP family.

It is found in the cell membrane. It carries out the reaction di-trans,octa-cis-undecaprenyl diphosphate + H2O = di-trans,octa-cis-undecaprenyl phosphate + phosphate + H(+). In terms of biological role, catalyzes the dephosphorylation of undecaprenyl diphosphate (UPP). Confers resistance to bacitracin. The polypeptide is Undecaprenyl-diphosphatase (Clostridium perfringens (strain 13 / Type A)).